Consider the following 311-residue polypeptide: Prohibitin-2 (311 aa).

Residues 39–57 traverse the membrane as a helical segment; sequence GAGMGLAGLVLLGGAAFVA. The AIM motif lies at 141 to 144; sequence YRTL.

Belongs to the prohibitin family. In terms of assembly, the mitochondrial prohibitin complex consists of two subunits (PHB1 and PHB2). The subunits assemble into a membrane-associated ring-shaped supercomplex of approximately 1 mDa. Interacts with ATG24/SNX4; the interaction is direct and plays a role in mitophagy.

The protein localises to the mitochondrion inner membrane. Functionally, prohibitin probably acts as a holdase/unfoldase for the stabilization of newly synthesized mitochondrial proteins. Involved in mitophagy. Required for the switch to necrotrophic growth. In Colletotrichum higginsianum (strain IMI 349063) (Crucifer anthracnose fungus), this protein is Prohibitin-2.